The following is a 550-amino-acid chain: Chaperonin GroEL (550 aa).

ATP contacts are provided by residues 30–33 (TLGP), lysine 51, 87–91 (DGTTT), glycine 414, and aspartate 494.

The protein belongs to the chaperonin (HSP60) family. Forms a cylinder of 14 subunits composed of two heptameric rings stacked back-to-back. Interacts with the co-chaperonin GroES.

It is found in the cytoplasm. It catalyses the reaction ATP + H2O + a folded polypeptide = ADP + phosphate + an unfolded polypeptide.. Together with its co-chaperonin GroES, plays an essential role in assisting protein folding. The GroEL-GroES system forms a nano-cage that allows encapsulation of the non-native substrate proteins and provides a physical environment optimized to promote and accelerate protein folding. The chain is Chaperonin GroEL from Buchnera aphidicola subsp. Thelaxes suberi.